The following is a 338-amino-acid chain: Methionyl-tRNA formyltransferase (338 aa).

110 to 113 is a binding site for (6S)-5,6,7,8-tetrahydrofolate; sequence SLLP.

The protein belongs to the Fmt family.

It carries out the reaction L-methionyl-tRNA(fMet) + (6R)-10-formyltetrahydrofolate = N-formyl-L-methionyl-tRNA(fMet) + (6S)-5,6,7,8-tetrahydrofolate + H(+). Attaches a formyl group to the free amino group of methionyl-tRNA(fMet). The formyl group appears to play a dual role in the initiator identity of N-formylmethionyl-tRNA by promoting its recognition by IF2 and preventing the misappropriation of this tRNA by the elongation apparatus. This Parasynechococcus marenigrum (strain WH8102) protein is Methionyl-tRNA formyltransferase.